The following is a 437-amino-acid chain: UDP-glucuronate 4-epimerase 4 (437 aa).

A helical membrane pass occupies residues 30–50 (SLTKFAFFSFFLLCLISLLFL). A disordered region spans residues 56–76 (INPSSPSDPSRRSLRTNTYGG). A helical transmembrane segment spans residues 96–116 (GITVLVTGAAGFVGTHVSAAL). Residue 98-129 (TVLVTGAAGFVGTHVSAALKRRGDGVIGLDNF) participates in NAD(+) binding. Residue tyrosine 248 is the Proton acceptor of the active site.

This sequence belongs to the NAD(P)-dependent epimerase/dehydratase family. In terms of assembly, homodimer. In terms of tissue distribution, in roots, leaves, siliques, flowers, pollen and stems.

Its subcellular location is the golgi apparatus. It localises to the golgi stack membrane. It catalyses the reaction UDP-alpha-D-glucuronate = UDP-alpha-D-galacturonate. Its activity is regulated as follows. Activated by glycerol, not effected by dimethyl sulfoxide and inhibited by high concentration of monovalent salts, UDP-xylose, UDP-arabinose or UDP. In terms of biological role, involved in the synthesis of the negatively charged monosaccharide that forms the backbone of pectic cell wall components. In Arabidopsis thaliana (Mouse-ear cress), this protein is UDP-glucuronate 4-epimerase 4 (GAE4).